The sequence spans 615 residues: Ras association domain-containing protein 1 homolog (615 aa).

2 disordered regions span residues 1-29 (MLRS…PTYQ) and 69-89 (SDDE…QSIG). Low complexity predominate over residues 76-87 (TSSTSSPQSEQS). A Phorbol-ester/DAG-type zinc finger spans residues 164 to 214 (NHSFKTHSLLHPTWCDKCGDFIWGILKEALKCEHCNYTCHARCRDLVTLDC). The segment at 249–268 (PAMSSSTGSDKENGNGNSAG) is disordered. Positions 251 to 268 (MSSSTGSDKENGNGNSAG) are enriched in polar residues. The region spanning 396-496 (KTTSLRTITS…RALVLQENDT (101 aa)) is the Ras-associating domain. Residues 498–545 (DILWDAFEIPELENFLRILGMEEKQYVFQTQQKYQQYRYHLDAELRQR) enclose the SARAH domain.

As to quaternary structure, interacts with rab-39 (GTP-bound form). Interacts (via SARAH domain) with cst-1; the interaction is required for the phosphorylation of cst-1. Expressed in the pharynx, epithelial cells, ciliated neurons in the head, body wall muscles, hypodermis, vulva, gonadal sheath cells, tail hypodermis and in coelomocytes. In terms of tissue distribution, expressed in the pharynx, neurons and vulva.

The protein localises to the cytoplasm. Its subcellular location is the cytoskeleton. Its function is as follows. Involved in embryonic morphogenesis. Plays a role in the organization of apical filamentous actin in epithelial cells of the developing embryo. May play a role in let-60-mediated vulval development. May induce nuclear condensation. Positively regulates the oxidative stress response, and this may be in association with the small GTPase rab-39. Not required for muscle integrity. The protein is Ras association domain-containing protein 1 homolog of Caenorhabditis elegans.